The chain runs to 472 residues: Regulator of G-protein signaling 6 (472 aa).

The DEP domain occupies 40-115 (KTGGVPIRTV…DDGTFYRFQA (76 aa)). In terms of domain architecture, G protein gamma spans 261–330 (IRKQITFLNA…MSKEPSQQRV (70 aa)). Positions 336–441 (SFDEILKDQV…LMKSDSYARF (106 aa)) constitute an RGS domain.

Interacts with GNB5. Interacts with RGS7BP, leading to regulate the subcellular location of the heterodimer formed with GNB5. Interacts with GNAI1.

Its subcellular location is the cytoplasm. The protein resides in the cytosol. The protein localises to the membrane. It is found in the nucleus. It localises to the cell membrane. In terms of biological role, regulates G protein-coupled receptor signaling cascades. Inhibits signal transduction by increasing the GTPase activity of G protein alpha subunits, thereby driving them into their inactive GDP-bound form. The RGS6/GNB5 dimer enhances GNAO1 GTPase activity. This Homo sapiens (Human) protein is Regulator of G-protein signaling 6 (RGS6).